A 241-amino-acid chain; its full sequence is Octanoyltransferase (241 aa).

The region spanning 43 to 228 is the BPL/LPL catalytic domain; the sequence is AETPDEIWLV…CLTANLDGSP (186 aa). Residues 83-90, 159-161, and 172-174 each bind substrate; these read RGGQITYH, ALG, and GVS. Cys-190 acts as the Acyl-thioester intermediate in catalysis.

It belongs to the LipB family.

The protein localises to the cytoplasm. The enzyme catalyses octanoyl-[ACP] + L-lysyl-[protein] = N(6)-octanoyl-L-lysyl-[protein] + holo-[ACP] + H(+). It participates in protein modification; protein lipoylation via endogenous pathway; protein N(6)-(lipoyl)lysine from octanoyl-[acyl-carrier-protein]: step 1/2. Catalyzes the transfer of endogenously produced octanoic acid from octanoyl-acyl-carrier-protein onto the lipoyl domains of lipoate-dependent enzymes. Lipoyl-ACP can also act as a substrate although octanoyl-ACP is likely to be the physiological substrate. The chain is Octanoyltransferase from Paraburkholderia xenovorans (strain LB400).